We begin with the raw amino-acid sequence, 375 residues long: MTLQATPLNAIHRALGARMVDFGGWDMPVNYGSQIEEHHAVRNDAGMFDVSHMCVVDLAGPNTRAFLRGLLANNVDKLQTPGKALYSCMLDEHGGVIDDLIVYFFAEDRFRLVVNAGTAVGDIDWIRARNEATGSGVTITPRREDVAPAGVPPLAIVAVQGPNARAKVWSTFPSTQPSDALKPFNAVVVQDPALGEVMVARTGYTGEDGFELVVPAASVAGLWEKLQAAGVRPAGLGARDTLRLEAGMNLYGQDMDIKVSPLDAGLAWTVDLQSERDFTGKAALAAAGSRQQFLGLILRDKGGVLRAHQKVITPAGDGEITSGTFSPSLSQSIAFARLPQGVNVGDTVQVEIRDRKLNATVVKLPFVRHGKALVS.

Belongs to the GcvT family. In terms of assembly, the glycine cleavage system is composed of four proteins: P, T, L and H.

It catalyses the reaction N(6)-[(R)-S(8)-aminomethyldihydrolipoyl]-L-lysyl-[protein] + (6S)-5,6,7,8-tetrahydrofolate = N(6)-[(R)-dihydrolipoyl]-L-lysyl-[protein] + (6R)-5,10-methylene-5,6,7,8-tetrahydrofolate + NH4(+). The glycine cleavage system catalyzes the degradation of glycine. This Cupriavidus taiwanensis (strain DSM 17343 / BCRC 17206 / CCUG 44338 / CIP 107171 / LMG 19424 / R1) (Ralstonia taiwanensis (strain LMG 19424)) protein is Aminomethyltransferase.